The chain runs to 201 residues: DeSI-like protein sdu1 (201 aa).

Residues Met1–Leu143 form the PPPDE domain. Catalysis depends on residues His29 and Cys105. The tract at residues Gly146–Pro201 is disordered. Residues Asp152–Thr167 show a composition bias toward acidic residues. Polar residues predominate over residues Asp191 to Pro201.

This sequence belongs to the DeSI family.

It localises to the cytoplasm. In terms of biological role, has a role in meiosis. The protein is DeSI-like protein sdu1 (sdu1) of Schizosaccharomyces pombe (strain 972 / ATCC 24843) (Fission yeast).